Here is a 453-residue protein sequence, read N- to C-terminus: Gamma-aminobutyric acid receptor subunit alpha-6 (453 aa).

Residues 1–19 form the signal peptide; sequence MASSLPWLCIILWLENALG. The Extracellular portion of the chain corresponds to 20–243; it reads KLEVEGNFYS…FHLQRKMGYF (224 aa). The N-linked (GlcNAc...) asparagine glycan is linked to Asn-31. Arg-84 contacts 4-aminobutanoate. N-linked (GlcNAc...) asparagine glycosylation is found at Asn-128 and Asn-141. Thr-147 is a binding site for 4-aminobutanoate. A disulfide bond links Cys-156 and Cys-170. Residues 244-264 traverse the membrane as a helical segment; it reads MIQIYTPCIMTVILSQVSFWI. At 265–270 the chain is on the cytoplasmic side; the sequence is NKESVP. A helical transmembrane segment spans residues 271–290; the sequence is ARTVFGITTVLTMTTLSISA. At 291 to 304 the chain is on the extracellular side; it reads RHSLPKVSYATAMD. Residues 305 to 325 traverse the membrane as a helical segment; that stretch reads WFIAVCFAFVFSALIEFAAVN. At 326–422 the chain is on the cytoplasmic side; the sequence is YFTNLQTQKA…GTSKIDQYSR (97 aa). Thr-403 is modified (phosphothreonine). A helical transmembrane segment spans residues 423-443; sequence ILFPVAFAGFNLVYWVVYLSK. Residues 444–453 are Extracellular-facing; the sequence is DTMEVSSSVE.

It belongs to the ligand-gated ion channel (TC 1.A.9) family. Gamma-aminobutyric acid receptor (TC 1.A.9.5) subfamily. GABRA6 sub-subfamily. Heteropentamer, formed by a combination of alpha (GABRA1-6), beta (GABRB1-3), gamma (GABRG1-3), delta (GABRD), epsilon (GABRE), rho (GABRR1-3), pi (GABRP) and theta (GABRQ) chains, each subunit exhibiting distinct physiological and pharmacological properties. Binds UBQLN1. Expressed in brain, in cerebellar granule cells.

The protein resides in the postsynaptic cell membrane. It is found in the cell membrane. The enzyme catalyses chloride(in) = chloride(out). Its function is as follows. Alpha subunit of the heteropentameric ligand-gated chloride channel gated by gamma-aminobutyric acid (GABA), a major inhibitory neurotransmitter in the brain. GABA-gated chloride channels, also named GABA(A) receptors (GABAAR), consist of five subunits arranged around a central pore and contain GABA active binding site(s) located at the alpha and beta subunit interface(s). When activated by GABA, GABAARs selectively allow the flow of chloride anions across the cell membrane down their electrochemical gradient. Alpha-6/GABRA6 subunits are found at both synaptic and extrasynaptic sites. Chloride influx into the postsynaptic neuron following GABAAR opening decreases the neuron ability to generate a new action potential, thereby reducing nerve transmission. Extrasynaptic alpha-6-containing receptors contribute to the tonic GABAergic inhibition. Alpha-6 subunits are also present on glutamatergic synapses. The polypeptide is Gamma-aminobutyric acid receptor subunit alpha-6 (Homo sapiens (Human)).